Here is an 86-residue protein sequence, read N- to C-terminus: Exopolysaccharide production repressor protein (86 aa).

Residues 18 to 38 (FAVTLAASVFLQVVYFLSLLF) traverse the membrane as a helical segment. Positions 44–86 (TRESDRSIHSGTRQADQPQKRDRDKTEQSNVPKLDPRRKRRTP) are disordered. Over residues 61–70 (PQKRDRDKTE) the composition is skewed to basic and acidic residues.

It is found in the cell membrane. It functions in the pathway glycan metabolism; exopolysaccharide biosynthesis. Functionally, inhibition of exopolysaccharide synthesis (EPS) and nodulation ability (NOD). The chain is Exopolysaccharide production repressor protein (exoX) from Rhizobium leguminosarum bv. phaseoli.